The chain runs to 342 residues: NADH-ubiquinone oxidoreductase chain 2 (342 aa).

Helical transmembrane passes span 25 to 45, 58 to 78, 94 to 114, 146 to 166, 174 to 194, 195 to 215, 238 to 258, 274 to 294, and 316 to 336; these read TPWLGTWMGLEINLLSIIPML, IKYFIIQSMASTMLLISILII, MMIMSSMMMKMGAAPFHFWLP, MSSFLFVVIMMGIIVGAMGGL, ILAYSSISHLGWMISSMTISE, NTWEFYFLIYSTLNVIIIFMF, FMMMTSLLSLGGLPPMLGFLP, LVLLMITFTTITLYYYMRISF, and VVALPILSMISTMGLICTSNF.

It belongs to the complex I subunit 2 family.

The protein resides in the mitochondrion inner membrane. The catalysed reaction is a ubiquinone + NADH + 5 H(+)(in) = a ubiquinol + NAD(+) + 4 H(+)(out). Functionally, core subunit of the mitochondrial membrane respiratory chain NADH dehydrogenase (Complex I) that is believed to belong to the minimal assembly required for catalysis. Complex I functions in the transfer of electrons from NADH to the respiratory chain. The immediate electron acceptor for the enzyme is believed to be ubiquinone. The sequence is that of NADH-ubiquinone oxidoreductase chain 2 (ND2) from Locusta migratoria (Migratory locust).